A 263-amino-acid polypeptide reads, in one-letter code: Endonuclease 8 (263 aa).

The active-site Schiff-base intermediate with DNA is Pro-2. Glu-3 acts as the Proton donor in catalysis. Lys-53 acts as the Proton donor; for beta-elimination activity in catalysis. 3 residues coordinate DNA: Gln-70, Arg-125, and Asn-169. The FPG-type zinc-finger motif lies at 229–263 (KVFHRDGELCERCGGIIEKTTLSSRPFYWCPGCQH). The active-site Proton donor; for delta-elimination activity is the Arg-253.

It belongs to the FPG family. Zn(2+) serves as cofactor.

The catalysed reaction is 2'-deoxyribonucleotide-(2'-deoxyribose 5'-phosphate)-2'-deoxyribonucleotide-DNA = a 3'-end 2'-deoxyribonucleotide-(2,3-dehydro-2,3-deoxyribose 5'-phosphate)-DNA + a 5'-end 5'-phospho-2'-deoxyribonucleoside-DNA + H(+). Involved in base excision repair of DNA damaged by oxidation or by mutagenic agents. Acts as a DNA glycosylase that recognizes and removes damaged bases. Has a preference for oxidized pyrimidines, such as thymine glycol, 5,6-dihydrouracil and 5,6-dihydrothymine. Has AP (apurinic/apyrimidinic) lyase activity and introduces nicks in the DNA strand. Cleaves the DNA backbone by beta-delta elimination to generate a single-strand break at the site of the removed base with both 3'- and 5'-phosphates. The polypeptide is Endonuclease 8 (Escherichia coli (strain SE11)).